We begin with the raw amino-acid sequence, 83 residues long: Large ribosomal subunit protein bL27 (83 aa).

This sequence belongs to the bacterial ribosomal protein bL27 family.

The chain is Large ribosomal subunit protein bL27 from Thermotoga neapolitana (strain ATCC 49049 / DSM 4359 / NBRC 107923 / NS-E).